A 444-amino-acid polypeptide reads, in one-letter code: Protein EMP46 (444 aa).

A signal peptide spans 1–46 (MTTRKTASSLQLLGKITGTKAGTKQKKMNFINGLIWLYMCVWMVHG). The Lumenal segment spans residues 47-408 (KVTQKDELKW…YGKQTKGHDE (362 aa)). Residues 52-269 (DELKWNKGYS…EILKMKLYDG (218 aa)) enclose the L-type lectin-like domain. Y177 contributes to the K(+) binding site. An intrachain disulfide couples C196 to C230. The helical transmembrane segment at 409-429 (IFSKISVWLALLIFIMITLAY) threads the bilayer. The interval 429-432 (YYMF) is mediates the interactions with COPI and COPII coat complexes. Over 430 to 444 (YMFRINQDIKKVKLL) the chain is Cytoplasmic. Positions 440-444 (KVKLL) match the Di-lysine motif motif.

Belongs to the EMP46/EMP47 family. Interacts with EMP47 in the endoplasmic reticulum membrane in order to be transported to the Golgi apparatus. Interacts with the coatomer proteins COP1, SEC21 and SEC23.

It is found in the golgi apparatus membrane. The protein resides in the endoplasmic reticulum membrane. Its function is as follows. Involved in the secretion of glycoproteins and in nucleus architecture and gene silencing. This is Protein EMP46 (EMP46) from Saccharomyces cerevisiae (strain ATCC 204508 / S288c) (Baker's yeast).